Consider the following 82-residue polypeptide: uncharacterized protein (82 aa).

2 consecutive transmembrane segments (helical) span residues Trp-22–Ala-39 and Leu-46–Ile-65.

The protein resides in the cell membrane. This is an uncharacterized protein from Bacillus subtilis (strain 168).